The sequence spans 61 residues: Small ribosomal subunit protein uS14 (61 aa).

Cys-24, Cys-27, Cys-40, and Cys-43 together coordinate Zn(2+).

Belongs to the universal ribosomal protein uS14 family. Zinc-binding uS14 subfamily. As to quaternary structure, part of the 30S ribosomal subunit. Contacts proteins S3 and S10. Requires Zn(2+) as cofactor.

Functionally, binds 16S rRNA, required for the assembly of 30S particles and may also be responsible for determining the conformation of the 16S rRNA at the A site. The sequence is that of Small ribosomal subunit protein uS14 from Mycoplasma mobile (strain ATCC 43663 / 163K / NCTC 11711) (Mesomycoplasma mobile).